A 111-amino-acid polypeptide reads, in one-letter code: Large ribosomal subunit protein uL22 (111 aa).

Belongs to the universal ribosomal protein uL22 family. Part of the 50S ribosomal subunit.

Its function is as follows. This protein binds specifically to 23S rRNA; its binding is stimulated by other ribosomal proteins, e.g. L4, L17, and L20. It is important during the early stages of 50S assembly. It makes multiple contacts with different domains of the 23S rRNA in the assembled 50S subunit and ribosome. Functionally, the globular domain of the protein is located near the polypeptide exit tunnel on the outside of the subunit, while an extended beta-hairpin is found that lines the wall of the exit tunnel in the center of the 70S ribosome. In Chlamydia abortus (strain DSM 27085 / S26/3) (Chlamydophila abortus), this protein is Large ribosomal subunit protein uL22.